The sequence spans 271 residues: Urease accessory protein UreD (271 aa).

The protein belongs to the UreD family. As to quaternary structure, ureD, UreF and UreG form a complex that acts as a GTP-hydrolysis-dependent molecular chaperone, activating the urease apoprotein by helping to assemble the nickel containing metallocenter of UreC. The UreE protein probably delivers the nickel.

It localises to the cytoplasm. Its function is as follows. Required for maturation of urease via the functional incorporation of the urease nickel metallocenter. In Halalkalibacterium halodurans (strain ATCC BAA-125 / DSM 18197 / FERM 7344 / JCM 9153 / C-125) (Bacillus halodurans), this protein is Urease accessory protein UreD.